The primary structure comprises 483 residues: Regulatory protein ViaA (483 aa).

This sequence belongs to the ViaA family. In terms of assembly, homodimer. Interacts with RavA.

It is found in the cytoplasm. Its function is as follows. Component of the RavA-ViaA chaperone complex, which may act on the membrane to optimize the function of some of the respiratory chains. ViaA stimulates the ATPase activity of RavA. The sequence is that of Regulatory protein ViaA from Escherichia coli O6:K15:H31 (strain 536 / UPEC).